We begin with the raw amino-acid sequence, 689 residues long: DNA ligase (689 aa).

NAD(+)-binding positions include 40 to 44 (DSEYD), 89 to 90 (SL), and glutamate 121. Lysine 123 acts as the N6-AMP-lysine intermediate in catalysis. NAD(+) contacts are provided by arginine 144, glutamate 179, lysine 295, and lysine 319. Zn(2+) is bound by residues cysteine 413, cysteine 416, cysteine 431, and cysteine 437. The 80-residue stretch at 610 to 689 (REQSSLTDKI…EEWLTLIKNV (80 aa)) folds into the BRCT domain.

Belongs to the NAD-dependent DNA ligase family. LigA subfamily. Requires Mg(2+) as cofactor. The cofactor is Mn(2+).

The enzyme catalyses NAD(+) + (deoxyribonucleotide)n-3'-hydroxyl + 5'-phospho-(deoxyribonucleotide)m = (deoxyribonucleotide)n+m + AMP + beta-nicotinamide D-nucleotide.. In terms of biological role, DNA ligase that catalyzes the formation of phosphodiester linkages between 5'-phosphoryl and 3'-hydroxyl groups in double-stranded DNA using NAD as a coenzyme and as the energy source for the reaction. It is essential for DNA replication and repair of damaged DNA. The polypeptide is DNA ligase (Rickettsia africae (strain ESF-5)).